Here is a 118-residue protein sequence, read N- to C-terminus: Large ribosomal subunit protein bL20 (118 aa).

The protein belongs to the bacterial ribosomal protein bL20 family.

Binds directly to 23S ribosomal RNA and is necessary for the in vitro assembly process of the 50S ribosomal subunit. It is not involved in the protein synthesizing functions of that subunit. This Caulobacter vibrioides (strain ATCC 19089 / CIP 103742 / CB 15) (Caulobacter crescentus) protein is Large ribosomal subunit protein bL20.